Here is a 298-residue protein sequence, read N- to C-terminus: Inosose dehydratase (298 aa).

It belongs to the IolE/MocC family. Requires glutathione as cofactor. Co(2+) serves as cofactor. The cofactor is Mn(2+).

It carries out the reaction scyllo-inosose = 3D-3,5/4-trihydroxycyclohexane-1,2-dione + H2O. The protein operates within polyol metabolism; myo-inositol degradation into acetyl-CoA; acetyl-CoA from myo-inositol: step 2/7. Catalyzes the dehydration of inosose (2-keto-myo-inositol, 2KMI or 2,4,6/3,5-pentahydroxycyclohexanone) to 3D-(3,5/4)-trihydroxycyclohexane-1,2-dione (D-2,3-diketo-4-deoxy-epi-inositol). This is Inosose dehydratase from Lacticaseibacillus casei (Lactobacillus casei).